We begin with the raw amino-acid sequence, 632 residues long: tRNA uridine 5-carboxymethylaminomethyl modification enzyme MnmG (632 aa).

FAD is bound by residues 15 to 20, Ile127, and Ser182; that span reads GAGHAG. 276–290 provides a ligand contact to NAD(+); that stretch reads GPRYCPSIEDKIVRF. Gln373 contacts FAD.

Belongs to the MnmG family. Homodimer. Heterotetramer of two MnmE and two MnmG subunits. FAD is required as a cofactor.

The protein resides in the cytoplasm. Functionally, NAD-binding protein involved in the addition of a carboxymethylaminomethyl (cmnm) group at the wobble position (U34) of certain tRNAs, forming tRNA-cmnm(5)s(2)U34. The protein is tRNA uridine 5-carboxymethylaminomethyl modification enzyme MnmG of Streptococcus pyogenes serotype M1.